A 493-amino-acid polypeptide reads, in one-letter code: Glycylpeptide N-tetradecanoyltransferase (493 aa).

The interval 1-30 is disordered; the sequence is MSDSKDSKGKAPQKPNDAEQTPGGKLTPQA. Tetradecanoyl-CoA-binding positions include 82–85, 216–218, and 224–228; these read FKFW, LCI, and SKRLA. The active-site Proton acceptor; via carboxylate is the Leu493.

It belongs to the NMT family. In terms of assembly, monomer.

The protein resides in the cytoplasm. It carries out the reaction N-terminal glycyl-[protein] + tetradecanoyl-CoA = N-tetradecanoylglycyl-[protein] + CoA + H(+). In terms of biological role, adds a myristoyl group to the N-terminal glycine residue of certain cellular proteins. The chain is Glycylpeptide N-tetradecanoyltransferase (swoF) from Emericella nidulans (strain FGSC A4 / ATCC 38163 / CBS 112.46 / NRRL 194 / M139) (Aspergillus nidulans).